The sequence spans 395 residues: 8-amino-3,8-dideoxy-alpha-D-manno-octulosonate transaminase (395 aa).

Position 186 is an N6-(pyridoxal phosphate)lysine (Lys186).

This sequence belongs to the DegT/DnrJ/EryC1 family. Pyridoxal 5'-phosphate is required as a cofactor.

It carries out the reaction 8-amino-3,8-dideoxy-alpha-D-manno-octulosonate + 2-oxoglutarate = 3,8-dideoxy-8-oxo-alpha-D-manno-octulosonate + L-glutamate. The protein operates within bacterial outer membrane biogenesis; lipopolysaccharide biosynthesis. Catalyzes the second (last) step of the biosynthesis of Kdo8N (8-amino-3,8-dideoxy-D-manno-octulosonate) from Kdo (3-deoxy-D-manno-octulosonate). This Shewanella oneidensis (strain ATCC 700550 / JCM 31522 / CIP 106686 / LMG 19005 / NCIMB 14063 / MR-1) protein is 8-amino-3,8-dideoxy-alpha-D-manno-octulosonate transaminase.